We begin with the raw amino-acid sequence, 160 residues long: Nucleotide-binding protein Bpet3698 (160 aa).

It belongs to the YajQ family.

In terms of biological role, nucleotide-binding protein. This chain is Nucleotide-binding protein Bpet3698, found in Bordetella petrii (strain ATCC BAA-461 / DSM 12804 / CCUG 43448).